The chain runs to 114 residues: Cytochrome c oxidase assembly protein cox16, mitochondrial (114 aa).

A helical membrane pass occupies residues 29-49 (PFLLFGLPFMSVIVAGSFILT).

The protein belongs to the COX16 family.

It localises to the mitochondrion inner membrane. Functionally, required for the assembly of the mitochondrial respiratory chain complex IV (CIV), also known as cytochrome c oxidase. May participate in merging the COX1 and COX2 assembly lines. The sequence is that of Cytochrome c oxidase assembly protein cox16, mitochondrial (cox-9) from Neurospora crassa (strain ATCC 24698 / 74-OR23-1A / CBS 708.71 / DSM 1257 / FGSC 987).